Reading from the N-terminus, the 99-residue chain is Protein Frey (99 aa).

The helical transmembrane segment at 7 to 29 (GALYPRAGLSLFLLYLVLAAVLL) threads the bilayer. Positions 65–88 (PKHPWPRGPRPLLSRAQQRKRDGP) are disordered.

As to quaternary structure, interacts with SPPL2C (via active sites); the interaction stabilizes FREY1 protein and inhibits SPPL2C proteolytic activity. Interacts with IZUMO1; the interaction retains IZUMO1 at the endoplasmic reticulum membrane and coordinates IZUMO1 complex assembly.

The protein localises to the endoplasmic reticulum membrane. Functionally, key regulator for male fertility expressed transiently in round spermatids where it recruits IZUMO1 at the endoplasmic reticulum (ER) membrane and coordinates the oolemmal binding multimeric complex (IZUMO1 complex) assembly. Upon complete assembly of the IZUMO1 complex, its ER retention is released, facilitating IZUMO1 complex export to the acrosome. Through the interaction with SPPL2C, inhibits its intramembrane protease activity directly accessing the catalytic center of an I-CLiP. The chain is Protein Frey from Ailuropoda melanoleuca (Giant panda).